Here is a 95-residue protein sequence, read N- to C-terminus: Co-chaperonin GroES (95 aa).

The protein belongs to the GroES chaperonin family. Heptamer of 7 subunits arranged in a ring. Interacts with the chaperonin GroEL.

The protein resides in the cytoplasm. Together with the chaperonin GroEL, plays an essential role in assisting protein folding. The GroEL-GroES system forms a nano-cage that allows encapsulation of the non-native substrate proteins and provides a physical environment optimized to promote and accelerate protein folding. GroES binds to the apical surface of the GroEL ring, thereby capping the opening of the GroEL channel. The polypeptide is Co-chaperonin GroES (Rhodobacter capsulatus (Rhodopseudomonas capsulata)).